Here is a 333-residue protein sequence, read N- to C-terminus: Ferredoxin--NADP reductase (333 aa).

Positions 32, 40, 45, 85, 119, 285, and 326 each coordinate FAD.

Belongs to the ferredoxin--NADP reductase type 2 family. Homodimer. FAD is required as a cofactor.

The enzyme catalyses 2 reduced [2Fe-2S]-[ferredoxin] + NADP(+) + H(+) = 2 oxidized [2Fe-2S]-[ferredoxin] + NADPH. This Neorickettsia sennetsu (strain ATCC VR-367 / Miyayama) (Ehrlichia sennetsu) protein is Ferredoxin--NADP reductase.